We begin with the raw amino-acid sequence, 192 residues long: HTH-type transcriptional regulator Hpr (192 aa).

An HTH marR-type domain is found at 12-156; sequence SIIFSHKFAQ…LLSIVRHVYG (145 aa). A DNA-binding region (H-T-H motif) is located at residues 62 to 85; sequence ISDIAKFGVMHVSTAFNFSKKLEE.

Homodimer.

Functionally, negative regulator of protease production and sporulation. The polypeptide is HTH-type transcriptional regulator Hpr (Halalkalibacterium halodurans (strain ATCC BAA-125 / DSM 18197 / FERM 7344 / JCM 9153 / C-125) (Bacillus halodurans)).